The primary structure comprises 209 residues: High frequency lysogenization protein HflD homolog (209 aa).

The protein belongs to the HflD family.

The protein resides in the cytoplasm. The protein localises to the cell inner membrane. The chain is High frequency lysogenization protein HflD homolog from Halorhodospira halophila (strain DSM 244 / SL1) (Ectothiorhodospira halophila (strain DSM 244 / SL1)).